Here is a 104-residue protein sequence, read N- to C-terminus: Large ribosomal subunit protein bL21 (104 aa).

This sequence belongs to the bacterial ribosomal protein bL21 family. Part of the 50S ribosomal subunit. Contacts protein L20.

Functionally, this protein binds to 23S rRNA in the presence of protein L20. The polypeptide is Large ribosomal subunit protein bL21 (Symbiobacterium thermophilum (strain DSM 24528 / JCM 14929 / IAM 14863 / T)).